The following is a 236-amino-acid chain: MASLDRVKVLVLGDSGVGKSSLVHLLCHNQVLGNPSWTVGCSVDIRVHDYKEGTPEEKTYYIELWDVGGSVGSASSVKSTRAVFYNSVNGIILVHDLTNKKSSQNLYRWSLEVLNRDAVPTGVLVTNGDYDREQFADNQIPLLVIGTKLDQIHETKRHEVLIRTAFLAEDFNAEEINLDCTNPRSSAAGSSNAVKLSRFFDKVIEKRYFFREGNQIPGFSDRKRFGGGALKNFHCD.

Positions 1–235 (MASLDRVKVL…GGGALKNFHC (235 aa)) are small GTPase-like. GTP-binding positions include 16–21 (GVGKSS), 148–150 (KLD), and 179–180 (DC).

The protein belongs to the small GTPase superfamily. Rab family. In terms of assembly, homodimer. Interacts with GPR89; the interaction stabilizes GPR89. Interacts with RAP1GDS1.

Its function is as follows. Required for KRAS signaling regulation and modulation of cell proliferation. Regulator of KRAS prenylation, and probably prenylation of other small GTPases. Required for lymphocyte development and function. Not required for myeloid cell development. This chain is Rab-like protein 3 (Rabl3), found in Mus musculus (Mouse).